Reading from the N-terminus, the 267-residue chain is Tryptophan synthase alpha chain (267 aa).

Catalysis depends on proton acceptor residues glutamate 49 and aspartate 60.

This sequence belongs to the TrpA family. Tetramer of two alpha and two beta chains.

It carries out the reaction (1S,2R)-1-C-(indol-3-yl)glycerol 3-phosphate + L-serine = D-glyceraldehyde 3-phosphate + L-tryptophan + H2O. It functions in the pathway amino-acid biosynthesis; L-tryptophan biosynthesis; L-tryptophan from chorismate: step 5/5. In terms of biological role, the alpha subunit is responsible for the aldol cleavage of indoleglycerol phosphate to indole and glyceraldehyde 3-phosphate. This chain is Tryptophan synthase alpha chain, found in Geobacter sp. (strain M21).